A 255-amino-acid polypeptide reads, in one-letter code: Cysteine protease avirulence protein AvrRpt2 (255 aa).

The interval 1–50 is disordered; that stretch reads MKIAPVAINHSPLSREVPSHAAPTQAKQTNLQSEAGDLDARKSSASSPET. A propeptide spans 1-71 (removed in mature form); sequence MKIAPVAINH…RHKIEVPAFG (71 aa). The tract at residues 70–71 is determinants of cleavage specificity; sequence FG. The tract at residues 76 to 100 is disordered; sequence KKSSKHETGGSSANADSSSVASDST. Residues 86 to 98 are compositionally biased toward low complexity; sequence SSANADSSSVASD. Cysteine 122 acts as the Nucleophile in catalysis. Residues histidine 208 and aspartate 226 contribute to the active site.

It belongs to the peptidase C70 family. In terms of assembly, interacts physically with plant cell ROC1 (Arabidopsis single-domain cyclophilin) and RIN4. Post-translationally, autocleaved inside plant cells upon activation by cyclophilin. Cleavage is crucial in subcellular location and in eliciting HR. Inhibited by cyclosporin A (cyclophilin inhibitor).

It is found in the secreted. It localises to the host cell membrane. Functionally, effector protein involved in gene-for-gene resistance in plants expressing RPS2. Its thiol protease activity is required for the degradation of plant cell RIN4 and consequent activation of RPS2 during bacterial infection. The activation of RPS2 is sufficient for the induction of hypersensitive response (HR) and plant resistance. Cleavage of RIN4 by AvrRpt2 also interferes with RPM1-mediated resistance activated by either AvrRpm1 or AvrB. Contributes to virulence in plants lacking the resistance protein RPS2 promoting pathogen growth and disease symptoms. Inhibits PAMP (pathogen-associated molecular patterns)-induced signaling compromising the host's basal defense system. Blocks plant callose deposition, flg22 (a peptide corresponding to the most conserved domain of flagellin) induced accumulation of PR-1, PR-2 and PR-5 and activation of GST6 transcription. The mechanism of virulence is unknown, but this activity is independent of ethylene and salicylic acid response pathways and independent of RIN4 disappearance. This Pseudomonas syringae pv. tomato protein is Cysteine protease avirulence protein AvrRpt2 (avrRpt2).